Here is a 299-residue protein sequence, read N- to C-terminus: ATP phosphoribosyltransferase (299 aa).

This sequence belongs to the ATP phosphoribosyltransferase family. Long subfamily. As to quaternary structure, equilibrium between an active dimeric form, an inactive hexameric form and higher aggregates. Interconversion between the various forms is largely reversible and is influenced by the natural substrates and inhibitors of the enzyme. The cofactor is Mg(2+).

It is found in the cytoplasm. The enzyme catalyses 1-(5-phospho-beta-D-ribosyl)-ATP + diphosphate = 5-phospho-alpha-D-ribose 1-diphosphate + ATP. The protein operates within amino-acid biosynthesis; L-histidine biosynthesis; L-histidine from 5-phospho-alpha-D-ribose 1-diphosphate: step 1/9. Feedback inhibited by histidine. Catalyzes the condensation of ATP and 5-phosphoribose 1-diphosphate to form N'-(5'-phosphoribosyl)-ATP (PR-ATP). Has a crucial role in the pathway because the rate of histidine biosynthesis seems to be controlled primarily by regulation of HisG enzymatic activity. This chain is ATP phosphoribosyltransferase, found in Erwinia tasmaniensis (strain DSM 17950 / CFBP 7177 / CIP 109463 / NCPPB 4357 / Et1/99).